The chain runs to 479 residues: Ribosomal RNA small subunit methyltransferase F (479 aa).

Residues 128–134 (ASAPGSK), Glu-152, Asp-179, and Asp-197 each bind S-adenosyl-L-methionine. Cys-250 acts as the Nucleophile in catalysis.

The protein belongs to the class I-like SAM-binding methyltransferase superfamily. RsmB/NOP family.

Its subcellular location is the cytoplasm. It catalyses the reaction cytidine(1407) in 16S rRNA + S-adenosyl-L-methionine = 5-methylcytidine(1407) in 16S rRNA + S-adenosyl-L-homocysteine + H(+). In terms of biological role, specifically methylates the cytosine at position 1407 (m5C1407) of 16S rRNA. This chain is Ribosomal RNA small subunit methyltransferase F, found in Shewanella halifaxensis (strain HAW-EB4).